The primary structure comprises 125 residues: Holo-[acyl-carrier-protein] synthase (125 aa).

Positions 8 and 57 each coordinate Mg(2+).

It belongs to the P-Pant transferase superfamily. AcpS family. The cofactor is Mg(2+).

The protein localises to the cytoplasm. The catalysed reaction is apo-[ACP] + CoA = holo-[ACP] + adenosine 3',5'-bisphosphate + H(+). Its function is as follows. Transfers the 4'-phosphopantetheine moiety from coenzyme A to a Ser of acyl-carrier-protein. This is Holo-[acyl-carrier-protein] synthase from Laribacter hongkongensis (strain HLHK9).